The sequence spans 142 residues: Large ribosomal subunit protein uL11 (142 aa).

This sequence belongs to the universal ribosomal protein uL11 family. In terms of assembly, part of the ribosomal stalk of the 50S ribosomal subunit. Interacts with L10 and the large rRNA to form the base of the stalk. L10 forms an elongated spine to which L12 dimers bind in a sequential fashion forming a multimeric L10(L12)X complex. In terms of processing, one or more lysine residues are methylated.

Its function is as follows. Forms part of the ribosomal stalk which helps the ribosome interact with GTP-bound translation factors. The polypeptide is Large ribosomal subunit protein uL11 (Vesicomyosocius okutanii subsp. Calyptogena okutanii (strain HA)).